The sequence spans 159 residues: Phosphopantetheine adenylyltransferase (159 aa).

Serine 9 is a binding site for substrate. ATP contacts are provided by residues 9-10 (SF) and histidine 17. The substrate site is built by lysine 41, leucine 74, and lysine 88. ATP is bound by residues 89-91 (GLR), glutamate 99, and 123-129 (YGYISST).

This sequence belongs to the bacterial CoaD family. In terms of assembly, homohexamer. The cofactor is Mg(2+).

It is found in the cytoplasm. It carries out the reaction (R)-4'-phosphopantetheine + ATP + H(+) = 3'-dephospho-CoA + diphosphate. The protein operates within cofactor biosynthesis; coenzyme A biosynthesis; CoA from (R)-pantothenate: step 4/5. Its function is as follows. Reversibly transfers an adenylyl group from ATP to 4'-phosphopantetheine, yielding dephospho-CoA (dPCoA) and pyrophosphate. The polypeptide is Phosphopantetheine adenylyltransferase (Corynebacterium diphtheriae (strain ATCC 700971 / NCTC 13129 / Biotype gravis)).